Reading from the N-terminus, the 1153-residue chain is Myosin-3 (1153 aa).

The region spanning 104 to 153 (KKVLQFWVQLPNGNWELGKIMSTSGEESVIVVTEGKVLKVKSETLVPANP) is the Myosin N-terminal SH3-like domain. A Myosin motor domain is found at 157–829 (DGVDDLMQLS…QIGVLEDTRN (673 aa)). ATP-binding positions include 248-255 (GESGAGKT) and 296-304 (NDNSSRFGK). 2 actin-binding regions span residues 581 to 615 (LFEK…KQHL) and 709 to 731 (LFQL…KPNN). IQ domains follow at residues 831 to 860 (TLHG…GITI), 854 to 883 (LKTG…RHRA), and 903 to 932 (TVDA…LSSG). Residues 948–996 (YLSDLQRRVLRTEAALREKEEENDILRQRVQQYDNRWSEYETKMKSMEE) adopt a coiled-coil conformation. A disordered region spans residues 1020–1050 (DSARNSDASVNASDATDLDSGGSHYQMGHGR). Residues 1024–1033 (NSDASVNASD) show a composition bias toward polar residues.

This sequence belongs to the TRAFAC class myosin-kinesin ATPase superfamily. Myosin family. Plant myosin class VIII subfamily. As to quaternary structure, homodimer.

In terms of biological role, myosin heavy chain that is required for the cell cycle-regulated transport of various organelles and proteins for their segregation. Functions by binding with its tail domain to receptor proteins on organelles and exerting force with its N-terminal motor domain against actin filaments, thereby transporting its cargo along polarized actin cables. The polypeptide is Myosin-3 (VIII-A) (Arabidopsis thaliana (Mouse-ear cress)).